The sequence spans 160 residues: Large ribosomal subunit protein uL16 (160 aa).

The tract at residues 138-160 (KNLENSSQENTKDSKKSQEEVKQ) is disordered. The span at 147–160 (NTKDSKKSQEEVKQ) shows a compositional bias: basic and acidic residues.

This sequence belongs to the universal ribosomal protein uL16 family. Part of the 50S ribosomal subunit.

Its function is as follows. Binds 23S rRNA and is also seen to make contacts with the A and possibly P site tRNAs. This Prochlorococcus marinus (strain AS9601) protein is Large ribosomal subunit protein uL16.